The following is a 1292-amino-acid chain: DNA-directed RNA polymerase subunit beta' (1292 aa).

Zn(2+) contacts are provided by C70, C72, C85, and C88. Mg(2+)-binding residues include D532, D534, and D536. Residues C911, C987, C994, and C997 each coordinate Zn(2+).

Belongs to the RNA polymerase beta' chain family. In terms of assembly, the RNAP catalytic core consists of 2 alpha, 1 beta, 1 beta' and 1 omega subunit. When a sigma factor is associated with the core the holoenzyme is formed, which can initiate transcription. Mg(2+) is required as a cofactor. Zn(2+) serves as cofactor.

It catalyses the reaction RNA(n) + a ribonucleoside 5'-triphosphate = RNA(n+1) + diphosphate. Functionally, DNA-dependent RNA polymerase catalyzes the transcription of DNA into RNA using the four ribonucleoside triphosphates as substrates. This chain is DNA-directed RNA polymerase subunit beta', found in Mycoplasma genitalium (strain ATCC 33530 / DSM 19775 / NCTC 10195 / G37) (Mycoplasmoides genitalium).